Consider the following 317-residue polypeptide: Ribosomal RNA small subunit methyltransferase H (317 aa).

Residues 39–41, D59, F83, D104, and Q111 each bind S-adenosyl-L-methionine; that span reads GGH.

Belongs to the methyltransferase superfamily. RsmH family.

Its subcellular location is the cytoplasm. The enzyme catalyses cytidine(1402) in 16S rRNA + S-adenosyl-L-methionine = N(4)-methylcytidine(1402) in 16S rRNA + S-adenosyl-L-homocysteine + H(+). Specifically methylates the N4 position of cytidine in position 1402 (C1402) of 16S rRNA. The sequence is that of Ribosomal RNA small subunit methyltransferase H from Paraburkholderia xenovorans (strain LB400).